The sequence spans 292 residues: Phosphoribosylaminoimidazole-succinocarboxamide synthase (292 aa).

This sequence belongs to the SAICAR synthetase family.

The catalysed reaction is 5-amino-1-(5-phospho-D-ribosyl)imidazole-4-carboxylate + L-aspartate + ATP = (2S)-2-[5-amino-1-(5-phospho-beta-D-ribosyl)imidazole-4-carboxamido]succinate + ADP + phosphate + 2 H(+). The protein operates within purine metabolism; IMP biosynthesis via de novo pathway; 5-amino-1-(5-phospho-D-ribosyl)imidazole-4-carboxamide from 5-amino-1-(5-phospho-D-ribosyl)imidazole-4-carboxylate: step 1/2. The protein is Phosphoribosylaminoimidazole-succinocarboxamide synthase of Elusimicrobium minutum (strain Pei191).